The primary structure comprises 172 residues: Large ribosomal subunit protein uL10 (172 aa).

The protein belongs to the universal ribosomal protein uL10 family. Part of the ribosomal stalk of the 50S ribosomal subunit. The N-terminus interacts with L11 and the large rRNA to form the base of the stalk. The C-terminus forms an elongated spine to which L12 dimers bind in a sequential fashion forming a multimeric L10(L12)X complex.

Functionally, forms part of the ribosomal stalk, playing a central role in the interaction of the ribosome with GTP-bound translation factors. The polypeptide is Large ribosomal subunit protein uL10 (rplJ) (Liberibacter africanus subsp. capensis).